The chain runs to 194 residues: Holliday junction branch migration complex subunit RuvA (194 aa).

Positions 1-63 (MFEYMKGMIV…EDEAHLYGFV (63 aa)) are domain I. The tract at residues 64–142 (DKEELAMFKK…DSQVEYDQNF (79 aa)) is domain II. The segment at 143-146 (FNHE) is flexible linker. Residues 146-194 (ENKNNNEVVDALMALGYTKHEGEQAASAVRDTSLSTEEMIRKALNWLAR) are domain III.

The protein belongs to the RuvA family. In terms of assembly, homotetramer. Forms an RuvA(8)-RuvB(12)-Holliday junction (HJ) complex. HJ DNA is sandwiched between 2 RuvA tetramers; dsDNA enters through RuvA and exits via RuvB. An RuvB hexamer assembles on each DNA strand where it exits the tetramer. Each RuvB hexamer is contacted by two RuvA subunits (via domain III) on 2 adjacent RuvB subunits; this complex drives branch migration. In the full resolvosome a probable DNA-RuvA(4)-RuvB(12)-RuvC(2) complex forms which resolves the HJ.

It localises to the cytoplasm. Functionally, the RuvA-RuvB-RuvC complex processes Holliday junction (HJ) DNA during genetic recombination and DNA repair, while the RuvA-RuvB complex plays an important role in the rescue of blocked DNA replication forks via replication fork reversal (RFR). RuvA specifically binds to HJ cruciform DNA, conferring on it an open structure. The RuvB hexamer acts as an ATP-dependent pump, pulling dsDNA into and through the RuvAB complex. HJ branch migration allows RuvC to scan DNA until it finds its consensus sequence, where it cleaves and resolves the cruciform DNA. The polypeptide is Holliday junction branch migration complex subunit RuvA (Alkaliphilus metalliredigens (strain QYMF)).